The primary structure comprises 610 residues: Glutamine--fructose-6-phosphate aminotransferase [isomerizing] (610 aa).

Residue Cys2 is the Nucleophile; for GATase activity of the active site. Residues 2-219 (CGIVGYAGKK…SGEWGYFSQN (218 aa)) form the Glutamine amidotransferase type-2 domain. 2 consecutive SIS domains span residues 287–431 (SKDV…SDEE) and 459–600 (MSSH…PDQP). Lys605 (for Fru-6P isomerization activity) is an active-site residue.

In terms of assembly, homodimer.

It localises to the cytoplasm. The enzyme catalyses D-fructose 6-phosphate + L-glutamine = D-glucosamine 6-phosphate + L-glutamate. Its function is as follows. Catalyzes the first step in hexosamine metabolism, converting fructose-6P into glucosamine-6P using glutamine as a nitrogen source. The protein is Glutamine--fructose-6-phosphate aminotransferase [isomerizing] of Leptospira interrogans serogroup Icterohaemorrhagiae serovar copenhageni (strain Fiocruz L1-130).